Reading from the N-terminus, the 424-residue chain is CinA-like protein (424 aa).

It belongs to the CinA family.

The polypeptide is CinA-like protein (Shewanella piezotolerans (strain WP3 / JCM 13877)).